The following is a 372-amino-acid chain: Probable dual-specificity RNA methyltransferase RlmN (372 aa).

Positions 1–20 are disordered; sequence MTSLPLTPVNPDAPARRAAM. The active-site Proton acceptor is glutamate 112. The region spanning 118–357 is the Radical SAM core domain; that stretch reads YPDRVTVCLS…STTVRDTRGR (240 aa). Residues cysteine 125 and cysteine 363 are joined by a disulfide bond. Positions 132, 136, and 139 each coordinate [4Fe-4S] cluster. S-adenosyl-L-methionine is bound by residues 187–188, serine 221, 244–246, and asparagine 320; these read GE and SLH. Catalysis depends on cysteine 363, which acts as the S-methylcysteine intermediate.

This sequence belongs to the radical SAM superfamily. RlmN family. It depends on [4Fe-4S] cluster as a cofactor.

The protein localises to the cytoplasm. It catalyses the reaction adenosine(2503) in 23S rRNA + 2 reduced [2Fe-2S]-[ferredoxin] + 2 S-adenosyl-L-methionine = 2-methyladenosine(2503) in 23S rRNA + 5'-deoxyadenosine + L-methionine + 2 oxidized [2Fe-2S]-[ferredoxin] + S-adenosyl-L-homocysteine. It carries out the reaction adenosine(37) in tRNA + 2 reduced [2Fe-2S]-[ferredoxin] + 2 S-adenosyl-L-methionine = 2-methyladenosine(37) in tRNA + 5'-deoxyadenosine + L-methionine + 2 oxidized [2Fe-2S]-[ferredoxin] + S-adenosyl-L-homocysteine. In terms of biological role, specifically methylates position 2 of adenine 2503 in 23S rRNA and position 2 of adenine 37 in tRNAs. The sequence is that of Probable dual-specificity RNA methyltransferase RlmN from Salinispora tropica (strain ATCC BAA-916 / DSM 44818 / JCM 13857 / NBRC 105044 / CNB-440).